Here is a 619-residue protein sequence, read N- to C-terminus: Translation initiation factor eIF2B subunit delta (619 aa).

The span at 21-32 shows a compositional bias: basic and acidic residues; the sequence is GDYLDSKQEGKP. Positions 21–251 are disordered; sequence GDYLDSKQEG…PKQRGKITKK (231 aa). Residues 42–56 are compositionally biased toward low complexity; that stretch reads TNTSPVSIPTIISPP. Positions 57 to 84 are enriched in polar residues; the sequence is LGSNNSNYGKSPKSSYDNKQTSPLLSAS. Low complexity predominate over residues 85-98; that stretch reads NNRKNNNNNNNNNN. A compositionally biased stretch (polar residues) spans 99-125; the sequence is ATSPKDSSIIGKNNVNSDLSKVSSSLN. Residues 136-199 show a composition bias toward low complexity; the sequence is STSSTPTSTP…KQQSKQQATQ (64 aa). Residues 200-244 are compositionally biased toward basic and acidic residues; the sequence is QDKKDKEQQQQQQDKQDKESNEIKGSKEVAKDGQHGVKQFDDPKQ.

This sequence belongs to the eIF-2B alpha/beta/delta subunits family. As to quaternary structure, component of the translation initiation factor 2B (eIF2B) complex which is a heterodecamer of two sets of five different subunits: alpha, beta, gamma, delta and epsilon. Subunits alpha, beta and delta comprise a regulatory subcomplex and subunits epsilon and gamma comprise a catalytic subcomplex. Within the complex, the hexameric regulatory complex resides at the center, with the two heterodimeric catalytic subcomplexes bound on opposite sides.

It is found in the cytoplasm. Its subcellular location is the cytosol. Functionally, acts as a component of the translation initiation factor 2B (eIF2B) complex, which catalyzes the exchange of GDP for GTP on eukaryotic initiation factor 2 (eIF2) gamma subunit. Its guanine nucleotide exchange factor activity is repressed when bound to eIF2 complex phosphorylated on the alpha subunit, thereby limiting the amount of methionyl-initiator methionine tRNA available to the ribosome and consequently global translation is repressed. The protein is Translation initiation factor eIF2B subunit delta (eif2b4) of Dictyostelium discoideum (Social amoeba).